The following is a 964-amino-acid chain: Chromatin assembly factor 1 subunit A (964 aa).

The interval 1–49 is binds to PCNA; sequence MLEEPECGAPGARGEAAAMDCKDRPAFPVKKLIQARLPFKRLNLVPKEK. Residues 1–316 form a binds to CBX1 chromo shadow domain region; that stretch reads MLEEPECGAP…LHTGPSPFPA (316 aa). Residues Ser-126, Ser-141, and Ser-144 each carry the phosphoserine modification. Residues 146–232 form a disordered region; that stretch reads AQKNINGVPD…KDRDGWSEAG (87 aa). The span at 156 to 172 shows a compositional bias: basic and acidic residues; it reads KAGDDRGLPKARQKDEL. Lys-185 participates in a covalent cross-link: Glycyl lysine isopeptide (Lys-Gly) (interchain with G-Cter in SUMO1); alternate. Lys-185 is covalently cross-linked (Glycyl lysine isopeptide (Lys-Gly) (interchain with G-Cter in SUMO2); alternate). Residues 236–249 carry the PxVxL motif motif; that stretch reads FKGKMPVVVLQDIL. Disordered regions lie at residues 253 to 437 and 601 to 641; these read PPAR…REEE and DSDE…VPHG. The segment covering 284–298 has biased composition (low complexity); sequence LSHSSLSSSSPTSSP. The residue at position 312 (Ser-312) is a Phosphoserine. Residues 329 to 453 are a coiled coil; sequence RGSAEKNKMK…KAEITRFFQK (125 aa). Positions 331 to 437 are enriched in basic and acidic residues; it reads SAEKNKMKLQ…EEEKRLREEE (107 aa). 2 stretches are compositionally biased toward acidic residues: residues 601 to 612 and 620 to 635; these read DSDEEWEEEEPG and GDDDDDVGEDEDEDDG. The tract at residues 644–680 is necessary for homodimerization and competence for chromatin assembly; the sequence is SEDEGVTEECADPENHKVRQKLKAKEWDEFLAKGKRF. The segment at 662–964 is binds to p60; the sequence is RQKLKAKEWD…FVSPSSLRLS (303 aa). At Thr-723 the chain carries Phosphothreonine. The interval 769–799 is disordered; it reads RDAGSPEDSAASPPSPGPARPQTPTASEDVA. Positions 770–780 are enriched in low complexity; that stretch reads DAGSPEDSAAS. A phosphoserine mark is found at Ser-773, Ser-783, Ser-811, Ser-876, and Ser-881. The tract at residues 859 to 878 is disordered; it reads EDSGSVPAPGPGQGMPVSLK. Disordered stretches follow at residues 897 to 920 and 933 to 964; these read DGQVGTGDLDDFQADTEEEDDDEG and IQAPCGTTSGAGGSVGMDTSESFVSPSSLRLS. The span at 904–920 shows a compositional bias: acidic residues; sequence DLDDFQADTEEEDDDEG. Residues 949 to 964 show a composition bias toward polar residues; it reads MDTSESFVSPSSLRLS. Ser-959 is subject to Phosphoserine.

This sequence belongs to the CHAF1A family. Homodimer. Part of the CAF-1 complex that contains RBBP4, CHAF1B and CHAF1A. CHAF1A binds directly to CHAF1B. Only minor amounts of RBBP4 are complexed with CHAF1A and CHAF1B in G1 phase. Interacts with PCNA; the interaction is direct. Interacts (via the PxVxL motif) with CBX5; the interaction is direct. Interacts with MBD1. Interacts with histones H3.1, H3.2 and H3.1t.

Its subcellular location is the nucleus. Functionally, acts as a component of the histone chaperone complex chromatin assembly factor 1 (CAF-1), which assembles histone octamers onto DNA during replication and repair. CAF-1 performs the first step of the nucleosome assembly process, bringing newly synthesized histones H3 and H4 to replicating DNA; histones H2A/H2B can bind to this chromatin precursor subsequent to DNA replication to complete the histone octamer. It may play a role in heterochromatin maintenance in proliferating cells by bringing newly synthesized cbx proteins to heterochromatic DNA replication foci. This chain is Chromatin assembly factor 1 subunit A (CHAF1A), found in Bos taurus (Bovine).